A 283-amino-acid polypeptide reads, in one-letter code: Lectin subunit alpha (283 aa).

An N-terminal signal peptide occupies residues 1 to 23 (MSLTMKNVEGFVIFLVIFTSTAA). In terms of domain architecture, C-type lectin spans 51–159 (HECARHDQQL…NVKMGYICEP (109 aa)). Cystine bridges form between C53/C157 and C132/C149.

In terms of biological role, role in the defense system of the organism against microorganisms. This lectin binds galactose. In Sarcophaga peregrina (Flesh fly), this protein is Lectin subunit alpha.